Reading from the N-terminus, the 37-residue chain is Cytochrome b6-f complex subunit 5 (37 aa).

The chain crosses the membrane as a helical span at residues 5–25; it reads FLFGIVLGLIPITLTGLFVTA.

It belongs to the PetG family. The 4 large subunits of the cytochrome b6-f complex are cytochrome b6, subunit IV (17 kDa polypeptide, PetD), cytochrome f and the Rieske protein, while the 4 small subunits are PetG, PetL, PetM and PetN. The complex functions as a dimer.

It localises to the plastid. The protein localises to the chloroplast thylakoid membrane. Component of the cytochrome b6-f complex, which mediates electron transfer between photosystem II (PSII) and photosystem I (PSI), cyclic electron flow around PSI, and state transitions. PetG is required for either the stability or assembly of the cytochrome b6-f complex. The polypeptide is Cytochrome b6-f complex subunit 5 (Phalaenopsis aphrodite subsp. formosana (Moth orchid)).